The primary structure comprises 241 residues: Nuclear receptor-interacting protein 3 (241 aa).

The sequence is that of Nuclear receptor-interacting protein 3 (NRIP3) from Homo sapiens (Human).